A 535-amino-acid chain; its full sequence is Pentatricopeptide repeat-containing protein At5g16420, mitochondrial (535 aa).

A mitochondrion-targeting transit peptide spans 1 to 28; that stretch reads MFLSRVNPTRFPPFVASRRLFSASASAA. 12 PPR repeats span residues 82–112, 119–153, 154–189, 190–224, 225–259, 260–294, 295–329, 330–364, 365–395, 399–433, 434–468, and 469–503; these read NYDTYHSILFKLSRARAFDPVESLMADLRNS, GENLFIDLLRNYGLAGRYESSMRIFLRIPDFGVKR, SVRSLNTLLNVLIQNQRFDLVHAMFKNSKESFGITP, NIFTCNLLVKALCKKNDIESAYKVLDEIPSMGLVP, NLVTYTTILGGYVARGDMESAKRVLEEMLDRGWYP, DATTYTVLMDGYCKLGRFSEAATVMDDMEKNEIEP, NEVTYGVMIRALCKEKKSGEARNMFDEMLERSFMP, DSSLCCKVIDALCEDHKVDEACGLWRKMLKNNCMP, DNALLSTLIHWLCKEGRVTEARKLFDEFEKG, SLLTYNTLIAGMCEKGELTEAGRLWDDMYERKCKP, NAFTYNVLIEGLSKNGNVKEGVRVLEEMLEIGCFP, and NKTTFLILFEGLQKLGKEEDAMKIVSMAVMNGKVD.

It belongs to the PPR family. P subfamily.

It is found in the mitochondrion. In Arabidopsis thaliana (Mouse-ear cress), this protein is Pentatricopeptide repeat-containing protein At5g16420, mitochondrial.